The sequence spans 75 residues: Exodeoxyribonuclease 7 small subunit (75 aa).

The protein belongs to the XseB family. In terms of assembly, heterooligomer composed of large and small subunits.

The protein localises to the cytoplasm. The enzyme catalyses Exonucleolytic cleavage in either 5'- to 3'- or 3'- to 5'-direction to yield nucleoside 5'-phosphates.. Bidirectionally degrades single-stranded DNA into large acid-insoluble oligonucleotides, which are then degraded further into small acid-soluble oligonucleotides. The chain is Exodeoxyribonuclease 7 small subunit from Caldanaerobacter subterraneus subsp. tengcongensis (strain DSM 15242 / JCM 11007 / NBRC 100824 / MB4) (Thermoanaerobacter tengcongensis).